Reading from the N-terminus, the 287-residue chain is Flagellin (287 aa).

This sequence belongs to the bacterial flagellin family.

It is found in the secreted. It localises to the bacterial flagellum. Flagellin is the subunit protein which polymerizes to form the filaments of bacterial flagella. This is Flagellin (flaA) from Listeria monocytogenes serovar 1/2a (strain ATCC BAA-679 / EGD-e).